Reading from the N-terminus, the 127-residue chain is Large ribosomal subunit protein bL17 (127 aa).

The protein belongs to the bacterial ribosomal protein bL17 family. Part of the 50S ribosomal subunit. Contacts protein L32.

In Lactobacillus gasseri (strain ATCC 33323 / DSM 20243 / BCRC 14619 / CIP 102991 / JCM 1131 / KCTC 3163 / NCIMB 11718 / NCTC 13722 / AM63), this protein is Large ribosomal subunit protein bL17.